A 362-amino-acid polypeptide reads, in one-letter code: Trans-enoyl reductase phm4 (362 aa).

NADP(+) is bound at residue 50–53 (VDAK). Substrate is bound at residue 136-143 (TCFMTCGL). NADP(+) is bound by residues 171–174 (ATAT), 194–197 (SPHS), Tyr-212, and 259–260 (LD). 280-284 (GPIML) lines the substrate pocket. NADP(+) is bound at residue 349–350 (VN).

This sequence belongs to the zinc-containing alcohol dehydrogenase family. Monomer.

Its pathway is secondary metabolite biosynthesis. Its function is as follows. Trans-enoyl reductase; part of the gene cluster that mediates the biosynthesis of the trans-fused decalin-containing tetramic acid phomasetin, the stereochemical opposite of the HIV-1 integrase inhibitor equisetin. The PKS module of phm1 together with the enoylreductase phm4 catalyze the formation of the polyketide unit which is then conjugated to L-serine by the condensation domain of the phm1 NRPS module. Activity of the Dieckmann cyclase domain (RED) of phm1 results in release of the Dieckmann product intermediate. The Diels-Alderase phm7 then uses the Dieckmann product of phm1 as substrate and catalyzes the Diels-Alder cycloaddition to form the decalin ring of N-desmethylphomasetin. N-desmethylphomasetin is further methylated to phomasetin by the methyltransferase phm5. This Pyrenochaetopsis sp protein is Trans-enoyl reductase phm4.